The sequence spans 205 residues: ATP phosphoribosyltransferase (205 aa).

Belongs to the ATP phosphoribosyltransferase family. Short subfamily. As to quaternary structure, heteromultimer composed of HisG and HisZ subunits.

The protein localises to the cytoplasm. It carries out the reaction 1-(5-phospho-beta-D-ribosyl)-ATP + diphosphate = 5-phospho-alpha-D-ribose 1-diphosphate + ATP. It functions in the pathway amino-acid biosynthesis; L-histidine biosynthesis; L-histidine from 5-phospho-alpha-D-ribose 1-diphosphate: step 1/9. Functionally, catalyzes the condensation of ATP and 5-phosphoribose 1-diphosphate to form N'-(5'-phosphoribosyl)-ATP (PR-ATP). Has a crucial role in the pathway because the rate of histidine biosynthesis seems to be controlled primarily by regulation of HisG enzymatic activity. This chain is ATP phosphoribosyltransferase, found in Leptospira borgpetersenii serovar Hardjo-bovis (strain JB197).